We begin with the raw amino-acid sequence, 94 residues long: Small ribosomal subunit protein uS19 (94 aa).

This sequence belongs to the universal ribosomal protein uS19 family.

Protein S19 forms a complex with S13 that binds strongly to the 16S ribosomal RNA. This is Small ribosomal subunit protein uS19 from Clostridium botulinum (strain Hall / ATCC 3502 / NCTC 13319 / Type A).